Reading from the N-terminus, the 130-residue chain is MSMHDPISDMLTRIRNAQRANKAAVAMPSSKLKCAIAKVLKEEGYIEDFAVSSDVKSILEIQLKYYAGRPVIEQIKRVSRPGLRIYKASSEIPSVMNGLGIAIVSTSKGVMTDRKARSQGVGGELLCIVA.

It belongs to the universal ribosomal protein uS8 family. In terms of assembly, part of the 30S ribosomal subunit. Contacts proteins S5 and S12.

In terms of biological role, one of the primary rRNA binding proteins, it binds directly to 16S rRNA central domain where it helps coordinate assembly of the platform of the 30S subunit. The chain is Small ribosomal subunit protein uS8 from Neisseria meningitidis serogroup C (strain 053442).